The chain runs to 99 residues: Cytochrome c oxidase subunit 4 isoform 1, mitochondrial (99 aa).

The Mitochondrial matrix portion of the chain corresponds to serine 1–asparagine 73. Position 4 is an N6-acetyllysine; alternate (lysine 4). N6-succinyllysine; alternate is present on lysine 4. Lysine 28 is subject to N6-acetyllysine. Phosphoserine occurs at positions 31 and 33. N6-acetyllysine; alternate is present on lysine 35. Position 35 is an N6-succinyllysine; alternate (lysine 35). The residue at position 42 (lysine 42) is an N6-acetyllysine. The helical transmembrane segment at glutamate 74–tyrosine 99 threads the bilayer.

This sequence belongs to the cytochrome c oxidase IV family. As to quaternary structure, component of the cytochrome c oxidase (complex IV, CIV), a multisubunit enzyme composed of 14 subunits. The complex is composed of a catalytic core of 3 subunits MT-CO1, MT-CO2 and MT-CO3, encoded in the mitochondrial DNA, and 11 supernumerary subunits COX4I, COX5A, COX5B, COX6A, COX6B, COX6C, COX7A, COX7B, COX7C, COX8 and NDUFA4, which are encoded in the nuclear genome. The complex exists as a monomer or a dimer and forms supercomplexes (SCs) in the inner mitochondrial membrane with NADH-ubiquinone oxidoreductase (complex I, CI) and ubiquinol-cytochrome c oxidoreductase (cytochrome b-c1 complex, complex III, CIII), resulting in different assemblies (supercomplex SCI(1)III(2)IV(1) and megacomplex MCI(2)III(2)IV(2)). Interacts with PHB2; the interaction decreases in absence of SPHK2. Interacts with AFG1L. Interacts with ABCB7; this interaction allows the regulation of cellular iron homeostasis and cellular reactive oxygen species (ROS) levels in cardiomyocytes. Interacts with FLVCR2; this interaction occurs in the absence of heme and is disrupted upon heme binding. Interacts with IRGC.

The protein resides in the mitochondrion inner membrane. It participates in energy metabolism; oxidative phosphorylation. Component of the cytochrome c oxidase, the last enzyme in the mitochondrial electron transport chain which drives oxidative phosphorylation. The respiratory chain contains 3 multisubunit complexes succinate dehydrogenase (complex II, CII), ubiquinol-cytochrome c oxidoreductase (cytochrome b-c1 complex, complex III, CIII) and cytochrome c oxidase (complex IV, CIV), that cooperate to transfer electrons derived from NADH and succinate to molecular oxygen, creating an electrochemical gradient over the inner membrane that drives transmembrane transport and the ATP synthase. Cytochrome c oxidase is the component of the respiratory chain that catalyzes the reduction of oxygen to water. Electrons originating from reduced cytochrome c in the intermembrane space (IMS) are transferred via the dinuclear copper A center (CU(A)) of subunit 2 and heme A of subunit 1 to the active site in subunit 1, a binuclear center (BNC) formed by heme A3 and copper B (CU(B)). The BNC reduces molecular oxygen to 2 water molecules using 4 electrons from cytochrome c in the IMS and 4 protons from the mitochondrial matrix. The protein is Cytochrome c oxidase subunit 4 isoform 1, mitochondrial (COX4I1) of Trachypithecus cristatus (Silvered leaf-monkey).